Consider the following 483-residue polypeptide: Glutamate--tRNA ligase (483 aa).

A 'HIGH' region motif is present at residues 11-21 (PSPTGHLHIGN). A 'KMSKS' region motif is present at residues 252–256 (KLSKR). ATP is bound at residue Lys255.

The protein belongs to the class-I aminoacyl-tRNA synthetase family. Glutamate--tRNA ligase type 1 subfamily. In terms of assembly, monomer.

The protein localises to the cytoplasm. The enzyme catalyses tRNA(Glu) + L-glutamate + ATP = L-glutamyl-tRNA(Glu) + AMP + diphosphate. Its function is as follows. Catalyzes the attachment of glutamate to tRNA(Glu) in a two-step reaction: glutamate is first activated by ATP to form Glu-AMP and then transferred to the acceptor end of tRNA(Glu). The polypeptide is Glutamate--tRNA ligase (Bacillus velezensis (strain DSM 23117 / BGSC 10A6 / LMG 26770 / FZB42) (Bacillus amyloliquefaciens subsp. plantarum)).